Reading from the N-terminus, the 57-residue chain is UPF0391 membrane protein IL0696 (57 aa).

Helical transmembrane passes span 4–24 and 28–48; these read WVLI…GGIA and AGIA…SLVV.

Belongs to the UPF0391 family.

It localises to the cell membrane. The sequence is that of UPF0391 membrane protein IL0696 from Idiomarina loihiensis (strain ATCC BAA-735 / DSM 15497 / L2-TR).